Reading from the N-terminus, the 352-residue chain is C-C chemokine receptor type 5 (352 aa).

Topologically, residues Met1–Ala30 are extracellular. Tyr3 bears the Sulfotyrosine mark. O-linked (GalNAc...) serine glycans are attached at residues Ser6 and Ser7. A sulfotyrosine mark is found at Tyr10, Tyr14, and Tyr15. Intrachain disulfides connect Cys20–Cys269 and Cys101–Cys178. The helical transmembrane segment at Arg31–Cys58 threads the bilayer. The Cytoplasmic segment spans residues Lys59–Tyr68. The helical transmembrane segment at Leu69–Tyr89 threads the bilayer. Over Ala90–Gln102 the chain is Extracellular. A helical membrane pass occupies residues Leu103–Ile124. Residues Asp125–Thr141 are Cytoplasmic-facing. Residues Val142–Phe166 form a helical membrane-spanning segment. Topologically, residues Thr167–Ile198 are extracellular. Residues Val199–Leu218 form a helical membrane-spanning segment. At Lys219–Arg235 the chain is on the cytoplasmic side. Residues Leu236–Phe260 traverse the membrane as a helical segment. Residues Gln261 to Gln277 are Extracellular-facing. A helical transmembrane segment spans residues Ala278–Gly301. At Glu302–Leu352 the chain is on the cytoplasmic side. 3 S-palmitoyl cysteine lipidation sites follow: Cys321, Cys323, and Cys324. Phosphoserine; by BARK1 occurs at positions 336, 337, 342, and 349.

This sequence belongs to the G-protein coupled receptor 1 family. Interacts with PRAF2. Efficient ligand binding to CCL3/MIP-1alpha and CCL4/MIP-1beta requires sulfation, O-glycosylation and sialic acid modifications. Glycosylation on Ser-6 is required for efficient binding of CCL4. Interacts with GRK2. Interacts with ARRB1 and ARRB2. Interacts with CNIH4. Interacts with S100A4; this interaction stimulates T-lymphocyte chemotaxis. Post-translationally, sulfated on at least 2 of the N-terminal tyrosines. Sulfation is required for efficient binding of the chemokines, CCL3 and CCL4. In terms of processing, palmitoylation in the C-terminal is important for cell surface expression. Phosphorylation on serine residues in the C-terminal is stimulated by binding CC chemokines especially by APO-RANTES. Post-translationally, O-glycosylated, but not N-glycosylated. Ser-6 appears to be the major site even if Ser-7 may be also O-glycosylated. Also sialylated glycans present which contribute to chemokine binding. Thr-16 and Ser-17 may also be glycosylated and, if so, with small moieties such as a T-antigen.

It localises to the cell membrane. In terms of biological role, receptor for a number of inflammatory CC-chemokines including CCL3/MIP-1-alpha, CCL4/MIP-1-beta and RANTES and subsequently transduces a signal by increasing the intracellular calcium ion level. May play a role in the control of granulocytic lineage proliferation or differentiation. Participates in T-lymphocyte migration to the infection site by acting as a chemotactic receptor. The sequence is that of C-C chemokine receptor type 5 (CCR5) from Symphalangus syndactylus (Siamang).